Reading from the N-terminus, the 155-residue chain is Transport protein particle subunit bet5 (155 aa).

It belongs to the TRAPP small subunits family. BET5 subfamily. As to quaternary structure, part of the multisubunit TRAPP (transport protein particle) complex composed of bet3, bet5, trs20, trs23, trs31, trs33, trs65, trs85, trs120 and trs130.

Its subcellular location is the golgi apparatus. The protein resides in the cis-Golgi network. It is found in the endoplasmic reticulum. Functionally, may play a role in vesicular transport from endoplasmic reticulum to Golgi. The protein is Transport protein particle subunit bet5 (bet5) of Schizosaccharomyces pombe (strain 972 / ATCC 24843) (Fission yeast).